The sequence spans 132 residues: Small ribosomal subunit protein uS12 (132 aa).

Asp89 is modified (3-methylthioaspartic acid). The interval 106–132 (GVKDRKKSRSKYGTKKPKEAAKTAAKK) is disordered. Residues 109–120 (DRKKSRSKYGTK) are compositionally biased toward basic residues.

It belongs to the universal ribosomal protein uS12 family. As to quaternary structure, part of the 30S ribosomal subunit. Contacts proteins S8 and S17. May interact with IF1 in the 30S initiation complex.

Its function is as follows. With S4 and S5 plays an important role in translational accuracy. In terms of biological role, interacts with and stabilizes bases of the 16S rRNA that are involved in tRNA selection in the A site and with the mRNA backbone. Located at the interface of the 30S and 50S subunits, it traverses the body of the 30S subunit contacting proteins on the other side and probably holding the rRNA structure together. The combined cluster of proteins S8, S12 and S17 appears to hold together the shoulder and platform of the 30S subunit. This is Small ribosomal subunit protein uS12 (rpsL) from Thermus thermophilus (strain ATCC BAA-163 / DSM 7039 / HB27).